A 191-amino-acid polypeptide reads, in one-letter code: Thymidylate kinase (191 aa).

7 to 14 (GIDGVGKS) lines the ATP pocket.

This sequence belongs to the thymidylate kinase family.

It carries out the reaction dTMP + ATP = dTDP + ADP. Functionally, phosphorylation of dTMP to form dTDP in both de novo and salvage pathways of dTTP synthesis. The chain is Thymidylate kinase from Helicobacter acinonychis (strain Sheeba).